The sequence spans 126 residues: Holo-[acyl-carrier-protein] synthase (126 aa).

Mg(2+) is bound by residues D9 and E58.

This sequence belongs to the P-Pant transferase superfamily. AcpS family. Mg(2+) serves as cofactor.

The protein localises to the cytoplasm. It carries out the reaction apo-[ACP] + CoA = holo-[ACP] + adenosine 3',5'-bisphosphate + H(+). Transfers the 4'-phosphopantetheine moiety from coenzyme A to a Ser of acyl-carrier-protein. The chain is Holo-[acyl-carrier-protein] synthase from Buchnera aphidicola subsp. Schizaphis graminum (strain Sg).